The primary structure comprises 269 residues: Diaminopimelate epimerase (269 aa).

3 residues coordinate substrate: asparagine 13, glutamine 47, and asparagine 65. Cysteine 74 functions as the Proton donor in the catalytic mechanism. Residues 75–76 (GN), asparagine 149, asparagine 182, and 200–201 (ER) each bind substrate. The active-site Proton acceptor is cysteine 209. 210 to 211 (GT) is a substrate binding site.

It belongs to the diaminopimelate epimerase family. Homodimer.

Its subcellular location is the cytoplasm. The enzyme catalyses (2S,6S)-2,6-diaminopimelate = meso-2,6-diaminopimelate. Its pathway is amino-acid biosynthesis; L-lysine biosynthesis via DAP pathway; DL-2,6-diaminopimelate from LL-2,6-diaminopimelate: step 1/1. Catalyzes the stereoinversion of LL-2,6-diaminopimelate (L,L-DAP) to meso-diaminopimelate (meso-DAP), a precursor of L-lysine and an essential component of the bacterial peptidoglycan. The polypeptide is Diaminopimelate epimerase (Erythrobacter litoralis (strain HTCC2594)).